The chain runs to 607 residues: Chaperone protein DnaK (607 aa).

The residue at position 174 (Thr-174) is a Phosphothreonine; by autocatalysis. Residues 579 to 592 (AQAQAQQQAGANAG) show a composition bias toward low complexity. Positions 579 to 607 (AQAQAQQQAGANAGSDKKDEDVAEAEVVD) are disordered.

This sequence belongs to the heat shock protein 70 family.

Acts as a chaperone. The polypeptide is Chaperone protein DnaK (Fusobacterium nucleatum subsp. nucleatum (strain ATCC 25586 / DSM 15643 / BCRC 10681 / CIP 101130 / JCM 8532 / KCTC 2640 / LMG 13131 / VPI 4355)).